Consider the following 1125-residue polypeptide: Transient receptor potential cation channel subfamily A member 1 (1125 aa).

The Cytoplasmic segment spans residues 1 to 721 (MKRSLRRVLR…KWCAYGFRAH (721 aa)). 9 ANK repeats span residues 63–94 (ENLC…ALNV), 98–127 (YGNT…NPNL), 131–161 (NMMA…NINL), 165–194 (NGNT…KLCK), 198–227 (WGDY…KTGY), 239–268 (KKAS…HIDM), 272–301 (AKCM…GSSD), 309–338 (NQET…DINS), and 342–371 (EGRS…KVDI). Cystine bridges form between C193/C666, C463/C666, C609/C622, C622/C666, and C634/C859. 4-hydroxyproline; transient is present on P395. ANK repeat units lie at residues 413–442 (DGCT…SVHS), 446–475 (DKKS…DTRL), 482–511 (HGMT…LFLS), 514–543 (NGWT…KCTD), and 548–577 (EGNT…DILL). Positions 415 and 422 each coordinate (E)-cinnamaldehyde. Position 622 (C622) interacts with (E)-cinnamaldehyde. Position 634 is a cysteine sulfenic acid (-SOH); transient; in hyperoxia (C634). C642, C666, and K712 together coordinate (E)-cinnamaldehyde. A helical membrane pass occupies residues 722–742 (MMNLGSYCLGLIPMTLLVVKI). Residues 743–767 (QPGMAFNSTGIINETISTHEERINT) lie on the Extracellular side of the membrane. 2 N-linked (GlcNAc...) asparagine glycosylation sites follow: N749 and N755. The chain crosses the membrane as a helical span at residues 768 to 788 (LNSFPLKICMILVFLSSIFGY). Residues 789 to 806 (CKEVVQIFQQKRNYFLDY) are Cytoplasmic-facing. 4 residues coordinate Ca(2+): E791, Q794, N808, and E811. Residues 807–827 (NNALEWVIYTTSMIFVLPLFL) form a helical membrane-spanning segment. The Extracellular segment spans residues 828 to 832 (DIPAY). The helical transmembrane segment at 833-853 (MQWQCGAIAIFFYWMNFLLYL) threads the bilayer. At 854–876 (QRFENCGIFIVMLEVIFKTLLRS) the chain is on the cytoplasmic side. C859 is modified (cysteine sulfenic acid (-SOH); transient; in hyperoxia). A helical transmembrane segment spans residues 877 to 897 (TGVFIFLLLAFGLSFYVLLNF). The Extracellular segment spans residues 898–904 (QDAFSTP). An intramembrane region (pore-forming) is located at residues 905-925 (LLSLIQTFSMMLGDINYRDAF). Residues 926 to 937 (LEPLFRNELAYP) are Extracellular-facing. The helical transmembrane segment at 938 to 959 (VLTFGQLIAFTMFVPIVLMNLL) threads the bilayer. Residues 960–1125 (IGLAVGDIAE…THCSISHPDI (166 aa)) lie on the Cytoplasmic side of the membrane. Residues 1044–1073 (MEILKQKYRLKDLTSLLEKQHELIKLIIQK) are a coiled coil. 1048–1054 (KQKYRLK) is an a 1,2-diacyl-sn-glycero-3-phospho-(1D-myo-inositol) binding site.

This sequence belongs to the transient receptor (TC 1.A.4) family. Homotetramer. Interacts with TMEM100. Interacts with EGLN1. Interacts with the scorpion wasabi receptor toxin at the same site that electrophiles but in a non-covalent manner. TRPA1 activation by electrophiles occurs though covalent modification of specific cysteine residues in the N-terminal cytoplasmic domain. In terms of processing, hydroxylation is required for TRPA1 activity inhibition in normoxia. In hypoxia, the decrease in oxygen concentration diminishes the activity of the hydroxylase EGLN1, thus relieving TRPA1 from inhibition and ultimately leading to channel activation. Post-translationally, oxidation of Cys-634 and Cys-859 in hyperoxia may override the hydroxylase EGLN1-mediated inhibition, causing TRPA1 activation. As to expression, specifically expressed in a subset of nociceptive neurons. Expressed in dorsal root ganglia.

Its subcellular location is the cell membrane. The enzyme catalyses Ca(2+)(in) = Ca(2+)(out). The catalysed reaction is Mg(2+)(in) = Mg(2+)(out). It catalyses the reaction Na(+)(in) = Na(+)(out). It carries out the reaction K(+)(in) = K(+)(out). The enzyme catalyses Zn(2+)(in) = Zn(2+)(out). Its activity is regulated as follows. Electrophilic ligands activate the channel by covalent modification of intracellular cysteines; Cys-622 plays a key role in covalent binding of electrophiles. Extracellular Ca(2+) both potentiates and inactivates TRPA1; a rapid potentiation follows by slow desensitization. Activated by increase in intracellular Ca(2+) concentration. Inhibited by ruthenium red, a potent blocker of TRPV channels and selectively by A-967079. Activated by benzyl isothiocyanate (BITC), iodoacetamide, sulfhydryl reactive agent MTSEA, N-methyl maleimide (NMM), N-ethylmaleimide (NEM), and 2-aminoethyldiphenylborinate (2-APB). Also activated by hyperoxia. Acivated by intracellular Zn(2+). TRPA1 activation may critically depend on the presence of small intracellular compounds such as polyphosphates. Functionally, ligand-activated Ca(2+)-permeable, nonselective cation channel. Involved in pain detection and possibly also in cold perception, oxygen concentration perception, cough, itch, and inner ear function. Has a relatively high Ca(2+) selectivity, with a preference for divalent over monovalent cations (Ca(2+) &gt; Ba(2+) &gt; Mg(2+) &gt; NH4(+) &gt; Li(+) &gt; K(+)), the influx of cation into the cytoplasm, leads to membrane depolarization. Has a central role in the pain response to endogenous inflammatory mediators, such as bradykinin and to a diverse array of irritants. Activated by a large variety of structurally unrelated electrophilic and non-electrophilic chemical compounds, such as allylthiocyanate (AITC) from mustard oil or wasabi, cinnamaldehyde, diallyl disulfide (DADS) from garlic, and acrolein, an environmental irritant. Electrophilic ligands activate TRPA1 by interacting with critical N-terminal Cys residues in a covalent manner. Non-electrophile agonists bind at distinct sites in the transmembrane domain to promote channel activation. Also acts as an ionotropic cannabinoid receptor by being activated by delta(9)-tetrahydrocannabinol (THC), the psychoactive component of marijuana. May be a component for the mechanosensitive transduction channel of hair cells in inner ear, thereby participating in the perception of sounds. In Rattus norvegicus (Rat), this protein is Transient receptor potential cation channel subfamily A member 1.